Here is a 219-residue protein sequence, read N- to C-terminus: UPF0502 protein Gmet_0262 (219 aa).

The protein belongs to the UPF0502 family.

This is UPF0502 protein Gmet_0262 from Geobacter metallireducens (strain ATCC 53774 / DSM 7210 / GS-15).